Here is a 101-residue protein sequence, read N- to C-terminus: Small ribosomal subunit protein uS14 (101 aa).

It belongs to the universal ribosomal protein uS14 family. Part of the 30S ribosomal subunit. Contacts proteins S3 and S10.

Binds 16S rRNA, required for the assembly of 30S particles and may also be responsible for determining the conformation of the 16S rRNA at the A site. The chain is Small ribosomal subunit protein uS14 from Bartonella quintana (strain Toulouse) (Rochalimaea quintana).